The sequence spans 133 residues: Endoribonuclease YbeY (133 aa).

3 residues coordinate Zn(2+): H105, H109, and H115.

The protein belongs to the endoribonuclease YbeY family. Zn(2+) is required as a cofactor.

It localises to the cytoplasm. Single strand-specific metallo-endoribonuclease involved in late-stage 70S ribosome quality control and in maturation of the 3' terminus of the 16S rRNA. This is Endoribonuclease YbeY from Lawsonia intracellularis (strain PHE/MN1-00).